The following is a 39-amino-acid chain: Cytochrome b6-f complex subunit 5 (39 aa).

A helical membrane pass occupies residues 5-25 (LLCGIVLGLVPITLLGLFVAA).

It belongs to the PetG family. As to quaternary structure, the 4 large subunits of the cytochrome b6-f complex are cytochrome b6, subunit IV (17 kDa polypeptide, PetD), cytochrome f and the Rieske protein, while the 4 small subunits are PetG, PetL, PetM and PetN. The complex functions as a dimer.

It is found in the cellular thylakoid membrane. In terms of biological role, component of the cytochrome b6-f complex, which mediates electron transfer between photosystem II (PSII) and photosystem I (PSI), cyclic electron flow around PSI, and state transitions. PetG is required for either the stability or assembly of the cytochrome b6-f complex. The protein is Cytochrome b6-f complex subunit 5 of Prochlorococcus marinus (strain SARG / CCMP1375 / SS120).